Here is a 112-residue protein sequence, read N- to C-terminus: UPF0102 protein NIS_1551 (112 aa).

It belongs to the UPF0102 family.

The protein is UPF0102 protein NIS_1551 of Nitratiruptor sp. (strain SB155-2).